The following is a 333-amino-acid chain: 6-phosphogluconolactonase (333 aa).

It belongs to the cycloisomerase 2 family.

It catalyses the reaction 6-phospho-D-glucono-1,5-lactone + H2O = 6-phospho-D-gluconate + H(+). The protein operates within carbohydrate degradation; pentose phosphate pathway; D-ribulose 5-phosphate from D-glucose 6-phosphate (oxidative stage): step 2/3. In terms of biological role, catalyzes the hydrolysis of 6-phosphogluconolactone to 6-phosphogluconate. The polypeptide is 6-phosphogluconolactonase (Buchnera aphidicola subsp. Schizaphis graminum (strain Sg)).